The sequence spans 61 residues: Small ribosomal subunit protein uS14 (61 aa).

The Zn(2+) site is built by Cys-24, Cys-27, Cys-40, and Cys-43.

It belongs to the universal ribosomal protein uS14 family. Zinc-binding uS14 subfamily. Part of the 30S ribosomal subunit. Contacts proteins S3 and S10. Zn(2+) serves as cofactor.

Its function is as follows. Binds 16S rRNA, required for the assembly of 30S particles and may also be responsible for determining the conformation of the 16S rRNA at the A site. The polypeptide is Small ribosomal subunit protein uS14 (Lachnospira eligens (strain ATCC 27750 / DSM 3376 / VPI C15-48 / C15-B4) (Eubacterium eligens)).